Consider the following 303-residue polypeptide: Probable cell division protein WhiA (303 aa).

A DNA-binding region (H-T-H motif) is located at residues Ser-272 to Leu-303.

Belongs to the WhiA family.

Functionally, involved in cell division and chromosome segregation. The sequence is that of Probable cell division protein WhiA from Streptococcus pneumoniae (strain ATCC 700669 / Spain 23F-1).